The sequence spans 217 residues: Pyridoxine/pyridoxamine 5'-phosphate oxidase (217 aa).

Residues 13-16 (RREY) and K71 each bind substrate. Residues 66–71 (RIVLLK), 81–82 (YT), R87, K88, and Q110 contribute to the FMN site. The substrate site is built by Y128, R132, and S136. Residues 145–146 (QS) and W190 each bind FMN. Substrate is bound at residue 196 to 198 (RLH). Residue R200 coordinates FMN.

The protein belongs to the pyridoxamine 5'-phosphate oxidase family. In terms of assembly, homodimer. FMN is required as a cofactor.

The catalysed reaction is pyridoxamine 5'-phosphate + O2 + H2O = pyridoxal 5'-phosphate + H2O2 + NH4(+). The enzyme catalyses pyridoxine 5'-phosphate + O2 = pyridoxal 5'-phosphate + H2O2. Its pathway is cofactor metabolism; pyridoxal 5'-phosphate salvage; pyridoxal 5'-phosphate from pyridoxamine 5'-phosphate: step 1/1. It functions in the pathway cofactor metabolism; pyridoxal 5'-phosphate salvage; pyridoxal 5'-phosphate from pyridoxine 5'-phosphate: step 1/1. In terms of biological role, catalyzes the oxidation of either pyridoxine 5'-phosphate (PNP) or pyridoxamine 5'-phosphate (PMP) into pyridoxal 5'-phosphate (PLP). The chain is Pyridoxine/pyridoxamine 5'-phosphate oxidase from Yersinia enterocolitica serotype O:8 / biotype 1B (strain NCTC 13174 / 8081).